The sequence spans 752 residues: Pentatricopeptide repeat-containing protein At5g13270, chloroplastic (752 aa).

A chloroplast-targeting transit peptide spans 1–80; sequence MTILTVQSSF…LQEMDKAGVS (80 aa). PPR repeat units lie at residues 47–81, 82–116, 117–147, 148–182, 183–217, 218–248, 249–283, 284–318, 319–349, 350–384, 386–420, 421–451, 452–486, 487–522, and 523–553; these read QGQV…GVSV, SSYS…IENP, SVLL…MSEL, NAVS…GDKP, PSSM…GLCS, NTSI…MAVK, KPVA…GVEW, DSFV…GLES, EVSV…IREP, NDVS…NASI, NSFT…SLIG, SQYG…MDNP, DIVA…GMKP, NSVT…NVAP, and TIDH…MPFE. The interval 558-633 is type E motif; it reads SWKCFLSGCW…ELSCSWIQEK (76 aa). The tract at residues 634 to 664 is type E(+) motif; sequence GKIHRFIVGDKHHPQTQEIYEKLKEFDGFME. The tract at residues 665-752 is type DYW motif; the sequence is GDMFQCNMTE…EGKCSCNDYW (88 aa).

This sequence belongs to the PPR family. PCMP-H subfamily.

The protein resides in the plastid. It is found in the chloroplast. The sequence is that of Pentatricopeptide repeat-containing protein At5g13270, chloroplastic (PCMP-H90) from Arabidopsis thaliana (Mouse-ear cress).